Here is a 286-residue protein sequence, read N- to C-terminus: NAD kinase (286 aa).

D74 functions as the Proton acceptor in the catalytic mechanism. NAD(+) is bound by residues 74–75, 148–149, D178, A186, 189–194, and Q244; these read DG, ND, and TAYNLS.

This sequence belongs to the NAD kinase family. It depends on a divalent metal cation as a cofactor.

The protein localises to the cytoplasm. It catalyses the reaction NAD(+) + ATP = ADP + NADP(+) + H(+). In terms of biological role, involved in the regulation of the intracellular balance of NAD and NADP, and is a key enzyme in the biosynthesis of NADP. Catalyzes specifically the phosphorylation on 2'-hydroxyl of the adenosine moiety of NAD to yield NADP. In Campylobacter jejuni (strain RM1221), this protein is NAD kinase.